The primary structure comprises 327 residues: Serine/threonine-protein phosphatase PP1-1 (327 aa).

Asp-63, His-65, Asp-91, and Asn-123 together coordinate Mn(2+). His-124 acts as the Proton donor in catalysis. His-172 and His-247 together coordinate Mn(2+). The disordered stretch occupies residues 305 to 327; the sequence is GYQGSSQNWHMTPPRKNKTGNSK. Thr-316 bears the Phosphothreonine; by CDC2 mark. Residues 317–327 show a composition bias toward basic residues; that stretch reads PPRKNKTGNSK.

It belongs to the PPP phosphatase family. PP-1 subfamily. As to quaternary structure, oligomer. Requires Mn(2+) as cofactor.

The protein localises to the nucleus. It catalyses the reaction O-phospho-L-seryl-[protein] + H2O = L-seryl-[protein] + phosphate. The enzyme catalyses O-phospho-L-threonyl-[protein] + H2O = L-threonyl-[protein] + phosphate. Functionally, essential role in cell cycle control. PP1 is perhaps required for exit from mitosis. The polypeptide is Serine/threonine-protein phosphatase PP1-1 (dis2) (Schizosaccharomyces pombe (strain 972 / ATCC 24843) (Fission yeast)).